We begin with the raw amino-acid sequence, 54 residues long: Ovomucoid (54 aa).

The 51-residue stretch at 4-54 folds into the Kazal-like domain; the sequence is VDCSDYPKPVCTLDYMPLCGSDNKTYSNKCNFCNAVVDSNGTITLSHFGRC. Cystine bridges form between Cys-6-Cys-36, Cys-14-Cys-33, and Cys-22-Cys-54. Asn-43 is a glycosylation site (N-linked (GlcNAc...) asparagine).

The protein localises to the secreted. This is Ovomucoid from Coloeus monedula (Eurasian jackdaw).